The primary structure comprises 156 residues: Small ribosomal subunit protein uS7 (156 aa).

It belongs to the universal ribosomal protein uS7 family. As to quaternary structure, part of the 30S ribosomal subunit. Contacts proteins S9 and S11.

Its function is as follows. One of the primary rRNA binding proteins, it binds directly to 16S rRNA where it nucleates assembly of the head domain of the 30S subunit. Is located at the subunit interface close to the decoding center, probably blocks exit of the E-site tRNA. The sequence is that of Small ribosomal subunit protein uS7 from Brucella abortus (strain S19).